The following is a 494-amino-acid chain: Cytochrome P450 monooxygenase ccsD (494 aa).

Residues 5–25 (ISPRTLVLLAVTCSLLVLYFS) traverse the membrane as a helical segment. Cysteine 438 serves as a coordination point for heme. Asparagine 445 and asparagine 477 each carry an N-linked (GlcNAc...) asparagine glycan.

It belongs to the cytochrome P450 family. Requires heme as cofactor.

Its subcellular location is the membrane. It functions in the pathway mycotoxin biosynthesis. In terms of biological role, cytochrome P450 monooxygenase; part of the gene cluster that mediates the biosynthesis of a family of the mycotoxins cytochalasins E and K. The hybrid PKS-NRPS synthetase ccsA and the enoyl reductase ccsC are responsible for fusion of phenylalanine with an octaketide backbone and subsequent release of the stable tetramic acid precursor. The polyketide synthase module (PKS) of the PKS-NRPS ccsA is responsible for the synthesis of the octaketide backbone. The downstream nonribosomal peptide synthetase (NRPS) amidates the carboxyl end of the octaketide with a phenylalanine. A reductase-like domain (R) at the C-terminus catalyzes the reductive release of the polyketide-amino acid intermediate. Because ccsA lacks a designated enoylreductase (ER) domain, the required activity is provided the enoyl reductase ccsC. Upon formation of the 11-membered carbocycle-fused perhydroisoindolone intermediate, a number of oxidative steps are required to afford the final cytochalasin E and K, including two hydroxylations at C17 and C18, one alcohol oxidation at C17, one epoxidation at C6 and C7 and two Baeyer-Villiger oxidations. The oxidative modification at C17, C18 and the C6-C7 epoxidation are likely to be catalyzed by the two cytochrome P450 oxygenases ccsD and ccsG. CcsD may be responsible for the epoxidation of the C6-C7 double bond. CcsG may be responsible for the successive oxidative modifications at C17 and C18. The double Baeyer-Villiger oxidations of ketocytochalasin to precytochalasin and cytochalasin Z(16) are among the final steps leading to cytochalasin E and K and are catalyzed by ccsB. The first oxygen insertion step follows that of the classic BVMO mechanism, generating the ester precytochalasin. Release of precytochalasin into an aqueous environment can generate the shunt product iso-precytochalasin through spontaneous isomerization. Alternatively, precytochalasin can undergo further oxidation by ccsB to yield the in-line carbonate-containing cytochalasin Z(16). Cytochalasin Z(16) is a precursor to cytochalasin E and cytochalasin K, whereas iso-precytochalasin is a precursor to cytochalasin Z(17) and rosellichalasin. The hydrolyase ccsE may catalyze hydrolysis of epoxide bond in cytochalasin E to afford cytochalasin K. The function of ccsF has not been assigned but it may play a role in post-PKS-NRPS biosynthetic step, resistance or transport of cytochalasins and related PKS-NRPS products. The chain is Cytochrome P450 monooxygenase ccsD from Aspergillus clavatus (strain ATCC 1007 / CBS 513.65 / DSM 816 / NCTC 3887 / NRRL 1 / QM 1276 / 107).